Consider the following 707-residue polypeptide: Eomesodermin homolog (707 aa).

Over residues 27–42 the composition is skewed to gly residues; it reads GGGGGGGGGGGGGGGS. The interval 27–125 is disordered; the sequence is GGGGGGGGGG…GSPCAEEELP (99 aa). Low complexity predominate over residues 73 to 93; sequence AGSAEPAGAGAGAPAAMLSDA. A Phosphoserine modification is found at Ser-117. The T-box DNA-binding region spans 278 to 458; it reads LWLKFHRHQT…HNPFAKGFRD (181 aa). At Thr-473 the chain carries Phosphothreonine. Positions 592 to 707 are required for transcription activation; the sequence is AMAGWGGRGA…GAYYAFYTSP (116 aa). The segment at 642 to 689 is disordered; it reads TPPSIKSLDSSDSGVYNSACKRKRLSPSTPSNGNSPPIKCEDINTEEY. The segment covering 648 to 657 has biased composition (polar residues); that stretch reads SLDSSDSGVY. Residues 667-678 are compositionally biased toward low complexity; the sequence is SPSTPSNGNSPP. The span at 680-689 shows a compositional bias: basic and acidic residues; sequence KCEDINTEEY.

Expressed in CD8+ T-cells.

Its subcellular location is the nucleus. Its function is as follows. Functions as a transcriptional activator playing a crucial role during development. Functions in trophoblast differentiation and later in gastrulation, regulating both mesoderm delamination and endoderm specification. Plays a role in brain development being required for the specification and the proliferation of the intermediate progenitor cells and their progeny in the cerebral cortex. Required for differentiation and migration of unipolar dendritic brush cells. Also involved in the differentiation of CD8+ T-cells during immune response regulating the expression of lytic effector genes. The protein is Eomesodermin homolog (Eomes) of Mus musculus (Mouse).